The following is a 201-amino-acid chain: Probable cobalt-precorrin-6B C(15)-methyltransferase (decarboxylating) (201 aa).

Residues T28, 52 to 56 (GTGTG), D76, and A105 contribute to the S-adenosyl-L-methionine site.

This sequence belongs to the methyltransferase superfamily. Archaeal-type CbiT family.

The catalysed reaction is Co-precorrin-6B + S-adenosyl-L-methionine = Co-precorrin-7 + S-adenosyl-L-homocysteine + CO2. It functions in the pathway cofactor biosynthesis; adenosylcobalamin biosynthesis; cob(II)yrinate a,c-diamide from sirohydrochlorin (anaerobic route): step 8/10. Its function is as follows. Catalyzes the methylation of C-15 in cobalt-precorrin-6B followed by the decarboxylation of C-12 to form cobalt-precorrin-7. The protein is Probable cobalt-precorrin-6B C(15)-methyltransferase (decarboxylating) of Thermoplasma volcanium (strain ATCC 51530 / DSM 4299 / JCM 9571 / NBRC 15438 / GSS1).